A 292-amino-acid polypeptide reads, in one-letter code: E3 ubiquitin-protein ligase trim-21 (292 aa).

The RING-type zinc finger occupies 6–52 (CEICDDDFSSEEDGDHNPRNLKCSHTLCEGCIKKLLKNGRVVCPFCR). The segment at 90–137 (NFPPKCVEHPYNVAEFACIESNCSSKNKLMCQTCEEFGAHKGHAKELL) adopts a B box-type zinc-finger fold. Cys95, His98, Cys123, and His129 together coordinate Zn(2+). Positions 152–179 (INQLKLNIQNCTVKKNELEEAVVKSEQL) form a coiled coil.

It belongs to the TRIM/RBCC family. In terms of assembly, interacts with E2 ubiquitin-conjugating enzyme ubc-21. Interacts with ced-6; this mediates interaction of trim-21 with ced-1 and is required for ced-1 ubiquitination. Interacts with nck-1; the interaction is required for ced-1 ubiquitination. In terms of tissue distribution, in early larva, observed mainly in pharyngeal and body wall muscle cells.

It localises to the cytoplasm. It carries out the reaction S-ubiquitinyl-[E2 ubiquitin-conjugating enzyme]-L-cysteine + [acceptor protein]-L-lysine = [E2 ubiquitin-conjugating enzyme]-L-cysteine + N(6)-ubiquitinyl-[acceptor protein]-L-lysine.. It participates in protein modification; protein ubiquitination. In terms of biological role, E3 ubiquitin-protein ligase which catalyzes 'Lys-48'-linked polyubiquitination of ced-1, promoting its proteasomal degradation to maintain appropriate ced-1 levels for apoptotic cell clearance. Acts together with E2 ubiquitin-conjugating enzyme ubc-21. The chain is E3 ubiquitin-protein ligase trim-21 from Caenorhabditis elegans.